A 151-amino-acid chain; its full sequence is Probable cGMP 3',5'-cyclic phosphodiesterase subunit delta (151 aa).

The protein belongs to the PDE6D/unc-119 family. Interacts with Pde6.

Its subcellular location is the nucleus. The protein resides in the cytoplasm. This chain is Probable cGMP 3',5'-cyclic phosphodiesterase subunit delta, found in Drosophila willistoni (Fruit fly).